The sequence spans 334 residues: Holliday junction branch migration complex subunit RuvB (334 aa).

The interval 4-184 is large ATPase domain (RuvB-L); that stretch reads ADRIISASPQ…FGIVQRLEFY (181 aa). Residues isoleucine 23, arginine 24, glycine 65, lysine 68, threonine 69, threonine 70, 131-133, arginine 174, tyrosine 184, and arginine 221 contribute to the ATP site; that span reads EDY. Threonine 69 lines the Mg(2+) pocket. Residues 185-255 are small ATPAse domain (RuvB-S); the sequence is NVDDLTSIVK…IAKQALVMLD (71 aa). The interval 258–334 is head domain (RuvB-H); that stretch reads PQGFDFMDIK…YAHLGISLSE (77 aa). Residues arginine 294, arginine 313, and arginine 318 each coordinate DNA.

The protein belongs to the RuvB family. In terms of assembly, homohexamer. Forms an RuvA(8)-RuvB(12)-Holliday junction (HJ) complex. HJ DNA is sandwiched between 2 RuvA tetramers; dsDNA enters through RuvA and exits via RuvB. An RuvB hexamer assembles on each DNA strand where it exits the tetramer. Each RuvB hexamer is contacted by two RuvA subunits (via domain III) on 2 adjacent RuvB subunits; this complex drives branch migration. In the full resolvosome a probable DNA-RuvA(4)-RuvB(12)-RuvC(2) complex forms which resolves the HJ.

It is found in the cytoplasm. The enzyme catalyses ATP + H2O = ADP + phosphate + H(+). In terms of biological role, the RuvA-RuvB-RuvC complex processes Holliday junction (HJ) DNA during genetic recombination and DNA repair, while the RuvA-RuvB complex plays an important role in the rescue of blocked DNA replication forks via replication fork reversal (RFR). RuvA specifically binds to HJ cruciform DNA, conferring on it an open structure. The RuvB hexamer acts as an ATP-dependent pump, pulling dsDNA into and through the RuvAB complex. RuvB forms 2 homohexamers on either side of HJ DNA bound by 1 or 2 RuvA tetramers; 4 subunits per hexamer contact DNA at a time. Coordinated motions by a converter formed by DNA-disengaged RuvB subunits stimulates ATP hydrolysis and nucleotide exchange. Immobilization of the converter enables RuvB to convert the ATP-contained energy into a lever motion, pulling 2 nucleotides of DNA out of the RuvA tetramer per ATP hydrolyzed, thus driving DNA branch migration. The RuvB motors rotate together with the DNA substrate, which together with the progressing nucleotide cycle form the mechanistic basis for DNA recombination by continuous HJ branch migration. Branch migration allows RuvC to scan DNA until it finds its consensus sequence, where it cleaves and resolves cruciform DNA. This chain is Holliday junction branch migration complex subunit RuvB, found in Haemophilus ducreyi (strain 35000HP / ATCC 700724).